An 89-amino-acid polypeptide reads, in one-letter code: Small ribosomal subunit protein uS17 (89 aa).

This sequence belongs to the universal ribosomal protein uS17 family. In terms of assembly, part of the 30S ribosomal subunit.

One of the primary rRNA binding proteins, it binds specifically to the 5'-end of 16S ribosomal RNA. This chain is Small ribosomal subunit protein uS17, found in Delftia acidovorans (strain DSM 14801 / SPH-1).